Reading from the N-terminus, the 709-residue chain is Tyrosine-protein phosphatase cdc-14 (709 aa).

Residues Asp196 to Ser354 form the Tyrosine-protein phosphatase domain. Cys295 serves as the catalytic Phosphocysteine intermediate. The Nuclear localization signal signature appears at Lys366–Arg371. Positions Leu372–Leu381 match the Nuclear export signal motif. Disordered regions lie at residues Val403–Thr541, Arg573–Pro594, and Glu628–Ser661. Residues Gln404–Pro413 are compositionally biased toward polar residues. The segment covering Thr463–Thr479 has biased composition (low complexity). Composition is skewed to polar residues over residues Pro480–Leu490 and Pro501–Gly521. The span at Arg526–Thr541 shows a compositional bias: low complexity. The segment covering Pro639–Lys649 has biased composition (polar residues).

This sequence belongs to the protein-tyrosine phosphatase family. Non-receptor class CDC14 subfamily.

Its subcellular location is the cytoplasm. The protein resides in the cytoskeleton. It is found in the microtubule organizing center. The protein localises to the centrosome. It localises to the spindle. Its subcellular location is the midbody. The protein resides in the nucleus. It catalyses the reaction O-phospho-L-tyrosyl-[protein] + H2O = L-tyrosyl-[protein] + phosphate. Inhibited by sodium orthovanadate. Weakly inhibited by sodium fluoride and okadaic acid. Its function is as follows. Protein phosphatase that negatively regulates the G1-to-S phase transition to inhibit the cell cycle and establish quiescence in cells of multiple lineages including vulval, hypodermal and intestinal. Promotes nuclear accumulation and activity of the cyclin-dependent kinase inhibitor cki-1 which leads to inhibition of G1 progression during vulval tissue development. Has been shown to not be required for cytokinesis. However, in the embryo, in a contrasting study, has been shown to act as a regulator of central spindle formation and cytokinesis, and may be required for localization of the spindle component zen-4, and its interacting partner air-2 at the spindle during late cell divisions. Main regulator of cell cycle arrest in vulval precursor cells. The polypeptide is Tyrosine-protein phosphatase cdc-14 (Caenorhabditis elegans).